We begin with the raw amino-acid sequence, 247 residues long: Transcription factor bHLH92 (247 aa).

Residues 85–134 (ERSRRHMLKERTRREKQKQSYLALHSLLPFATKNDKNSIVEKAVDEIAKL) enclose the bHLH domain.

As to quaternary structure, homodimer.

The protein resides in the nucleus. This is Transcription factor bHLH92 (BHLH92) from Arabidopsis thaliana (Mouse-ear cress).